A 255-amino-acid chain; its full sequence is 1-(5-phosphoribosyl)-5-[(5-phosphoribosylamino)methylideneamino] imidazole-4-carboxamide isomerase (255 aa).

Residue Asp8 is the Proton acceptor of the active site. The Proton donor role is filled by Asp129.

It belongs to the HisA/HisF family.

It localises to the cytoplasm. It catalyses the reaction 1-(5-phospho-beta-D-ribosyl)-5-[(5-phospho-beta-D-ribosylamino)methylideneamino]imidazole-4-carboxamide = 5-[(5-phospho-1-deoxy-D-ribulos-1-ylimino)methylamino]-1-(5-phospho-beta-D-ribosyl)imidazole-4-carboxamide. The protein operates within amino-acid biosynthesis; L-histidine biosynthesis; L-histidine from 5-phospho-alpha-D-ribose 1-diphosphate: step 4/9. This chain is 1-(5-phosphoribosyl)-5-[(5-phosphoribosylamino)methylideneamino] imidazole-4-carboxamide isomerase, found in Prochlorococcus marinus (strain MIT 9303).